Consider the following 298-residue polypeptide: Aspartate carbamoyltransferase catalytic subunit (298 aa).

Residues Arg-50 and Thr-51 each coordinate carbamoyl phosphate. Residue Lys-79 participates in L-aspartate binding. Carbamoyl phosphate contacts are provided by Arg-100, His-128, and Gln-131. Positions 161 and 220 each coordinate L-aspartate. The carbamoyl phosphate site is built by Leu-259 and Pro-260.

It belongs to the aspartate/ornithine carbamoyltransferase superfamily. ATCase family. Heterooligomer of catalytic and regulatory chains.

The catalysed reaction is carbamoyl phosphate + L-aspartate = N-carbamoyl-L-aspartate + phosphate + H(+). It functions in the pathway pyrimidine metabolism; UMP biosynthesis via de novo pathway; (S)-dihydroorotate from bicarbonate: step 2/3. Functionally, catalyzes the condensation of carbamoyl phosphate and aspartate to form carbamoyl aspartate and inorganic phosphate, the committed step in the de novo pyrimidine nucleotide biosynthesis pathway. This is Aspartate carbamoyltransferase catalytic subunit from Sulfurisphaera tokodaii (strain DSM 16993 / JCM 10545 / NBRC 100140 / 7) (Sulfolobus tokodaii).